A 245-amino-acid polypeptide reads, in one-letter code: Acetylglutamate kinase (245 aa).

Residues 41–42, Arg-63, and Asn-156 each bind substrate; that span reads GG.

The protein belongs to the acetylglutamate kinase family. ArgB subfamily.

Its subcellular location is the cytoplasm. It catalyses the reaction N-acetyl-L-glutamate + ATP = N-acetyl-L-glutamyl 5-phosphate + ADP. It functions in the pathway amino-acid biosynthesis; L-arginine biosynthesis; N(2)-acetyl-L-ornithine from L-glutamate: step 2/4. Functionally, catalyzes the ATP-dependent phosphorylation of N-acetyl-L-glutamate. This is Acetylglutamate kinase from Streptococcus mutans serotype c (strain ATCC 700610 / UA159).